A 523-amino-acid polypeptide reads, in one-letter code: Inosine-5'-monophosphate dehydrogenase 2 (523 aa).

CBS domains lie at 121–183 and 184–240; these read FINN…VQDV and MTKN…PLAS. Residues 278-280 and 328-330 contribute to the NAD(+) site; these read DSS and GMG. Positions 330 and 332 each coordinate K(+). Serine 333 lines the IMP pocket. K(+) is bound at residue cysteine 335. The Thioimidate intermediate role is filled by cysteine 335. IMP is bound by residues 368 to 370, 391 to 392, and 415 to 419; these read DGG, GG, and YRGMG. Residue arginine 437 is the Proton acceptor of the active site. Glutamine 449 serves as a coordination point for IMP. The K(+) site is built by glutamate 508, glycine 509, and glycine 510.

This sequence belongs to the IMPDH/GMPR family. Homotetramer. Seems to be able to form heterotetramers composed from more than 1 of the 3 IMPDH gene products (IMD2-4). K(+) is required as a cofactor.

Its subcellular location is the cytoplasm. It catalyses the reaction IMP + NAD(+) + H2O = XMP + NADH + H(+). Its pathway is purine metabolism; XMP biosynthesis via de novo pathway; XMP from IMP: step 1/1. Mycophenolic acid (MPA) is a non-competitive inhibitor that prevents formation of the closed enzyme conformation by binding to the same site as the amobile flap. In contrast, mizoribine monophosphate (MZP) is a competitive inhibitor that induces the closed conformation. MPA is a potent inhibitor of mammalian IMPDHs but a poor inhibitor of the bacterial enzymes. MZP is a more potent inhibitor of bacterial IMPDH. Functionally, catalyzes the conversion of inosine 5'-phosphate (IMP) to xanthosine 5'-phosphate (XMP), the first committed and rate-limiting step in the de novo synthesis of guanine nucleotides, and therefore plays an important role in the regulation of cell growth. In contrast to the other IMPDH alleles IMD3 and IMD4, the enzymatic activity of IMD2 seems to be intrinsically drug resistant. This Saccharomyces cerevisiae (strain ATCC 204508 / S288c) (Baker's yeast) protein is Inosine-5'-monophosphate dehydrogenase 2.